Consider the following 210-residue polypeptide: Probable GTP-binding protein EngB (210 aa).

Positions 25–199 constitute an EngB-type G domain; it reads TGIEVAFAGR…RQKLDTWFSE (175 aa). Residues 33-40, 60-64, 78-81, 145-148, and 178-180 each bind GTP; these read GRSNAGKS, GRTQL, DLPG, TKAD, and FSS. Residues S40 and T62 each contribute to the Mg(2+) site.

The protein belongs to the TRAFAC class TrmE-Era-EngA-EngB-Septin-like GTPase superfamily. EngB GTPase family. The cofactor is Mg(2+).

In terms of biological role, necessary for normal cell division and for the maintenance of normal septation. The protein is Probable GTP-binding protein EngB of Shigella flexneri.